A 633-amino-acid polypeptide reads, in one-letter code: Phosphomethylpyrimidine synthase (633 aa).

Substrate is bound by residues Asn-245, Met-274, Tyr-303, His-339, 359 to 361 (SRG), 400 to 403 (DGLR), and Glu-439. His-443 serves as a coordination point for Zn(2+). Tyr-466 serves as a coordination point for substrate. His-507 contributes to the Zn(2+) binding site. [4Fe-4S] cluster contacts are provided by Cys-587, Cys-590, and Cys-595.

This sequence belongs to the ThiC family. In terms of assembly, homodimer. [4Fe-4S] cluster is required as a cofactor.

It catalyses the reaction 5-amino-1-(5-phospho-beta-D-ribosyl)imidazole + S-adenosyl-L-methionine = 4-amino-2-methyl-5-(phosphooxymethyl)pyrimidine + CO + 5'-deoxyadenosine + formate + L-methionine + 3 H(+). Its pathway is cofactor biosynthesis; thiamine diphosphate biosynthesis. Its function is as follows. Catalyzes the synthesis of the hydroxymethylpyrimidine phosphate (HMP-P) moiety of thiamine from aminoimidazole ribotide (AIR) in a radical S-adenosyl-L-methionine (SAM)-dependent reaction. In Neisseria gonorrhoeae (strain ATCC 700825 / FA 1090), this protein is Phosphomethylpyrimidine synthase.